Here is a 172-residue protein sequence, read N- to C-terminus: RNA pyrophosphohydrolase (172 aa).

Residues 6–149 form the Nudix hydrolase domain; sequence GFRANVGIII…KRDVYRKVMK (144 aa). A Nudix box motif is present at residues 38–59; it reads GGLDDGESVEEAMYRELYEEVG.

The protein belongs to the Nudix hydrolase family. RppH subfamily. Requires a divalent metal cation as cofactor.

Its function is as follows. Accelerates the degradation of transcripts by removing pyrophosphate from the 5'-end of triphosphorylated RNA, leading to a more labile monophosphorylated state that can stimulate subsequent ribonuclease cleavage. This is RNA pyrophosphohydrolase from Shewanella frigidimarina (strain NCIMB 400).